A 322-amino-acid chain; its full sequence is Lactamase-like protein nscB (322 aa).

4 residues coordinate Zn(2+): His-97, His-99, Asp-101, and His-102. Residue Asp-101 is the Proton donor/acceptor of the active site.

Belongs to the metallo-beta-lactamase superfamily. It depends on Zn(2+) as a cofactor.

It functions in the pathway secondary metabolite biosynthesis. In terms of biological role, lactamase-like protein; part of the gene cluster that mediates the biosynthesis of neosartoricin B, a prenylated anthracenone that probably exhibits T-cell antiproliferative activity, suggestive of a physiological role as an immunosuppressive agent. The non-reducing polyketide synthase nscA probably synthesizes and cyclizes the decaketide backbone. The hydrolase nscB then mediates the product release through hydrolysis followed by spontaneous decarboxylation. The prenyltransferase nscD catalyzes the addition of the dimethylallyl group to the aromatic C5. The FAD-dependent monooxygenase nscC is then responsible for the stereospecific hydroxylation at C2. Neosartoricin B can be converted into two additional compounds neosartoricins C and D. Neosartoricin C is a spirocyclic compound that is cyclized through the attack of C3 hydroxyl on C14, followed by dehydration. On the other hand, neosartoricin D is a further cyclized compound in which attack of C2 on C14 in neosartoricin C results in the formation of the acetal-containing dioxabicyclo-octanone ring. Both of these compounds are novel and possibly represent related metabolites of the gene cluster. The polypeptide is Lactamase-like protein nscB (Trichophyton rubrum (strain ATCC MYA-4607 / CBS 118892) (Athlete's foot fungus)).